A 289-amino-acid chain; its full sequence is 4-diphosphocytidyl-2-C-methyl-D-erythritol kinase (289 aa).

Residue Lys-11 is part of the active site. 95–105 (PMGGGIGGGSS) provides a ligand contact to ATP. Residue Asp-137 is part of the active site.

The protein belongs to the GHMP kinase family. IspE subfamily.

It catalyses the reaction 4-CDP-2-C-methyl-D-erythritol + ATP = 4-CDP-2-C-methyl-D-erythritol 2-phosphate + ADP + H(+). The protein operates within isoprenoid biosynthesis; isopentenyl diphosphate biosynthesis via DXP pathway; isopentenyl diphosphate from 1-deoxy-D-xylulose 5-phosphate: step 3/6. In terms of biological role, catalyzes the phosphorylation of the position 2 hydroxy group of 4-diphosphocytidyl-2C-methyl-D-erythritol. The protein is 4-diphosphocytidyl-2-C-methyl-D-erythritol kinase of Aeromonas salmonicida (strain A449).